Reading from the N-terminus, the 100-residue chain is Small ribosomal subunit protein uS14c (100 aa).

The segment at 1–31 (MARKSLIQREKKRQKLEQKYHSIRRSSKKEI) is disordered.

The protein belongs to the universal ribosomal protein uS14 family. In terms of assembly, part of the 30S ribosomal subunit.

It localises to the plastid. The protein localises to the chloroplast. In terms of biological role, binds 16S rRNA, required for the assembly of 30S particles. This is Small ribosomal subunit protein uS14c from Nicotiana tomentosiformis (Tobacco).